We begin with the raw amino-acid sequence, 754 residues long: MSESLDLSLEGVERRSLAEFTEQAYLNYSMYVIMDRALPHIGDGLKPVQRRIVYAMSELGLDADSKHKKSARTVGDVLGKFHPHGDSACYEAMVLMAQPFSYRYPLVDGQGNWGAPDDPKSFAAMRYTEARLSRYSEVLLSELGQGTVDWVPNFDGTLDEPAVLPARLPNLLLNGTTGIAVGMATDVPPHNLREVASACVRLLDQPGATVAELCEHVPGPDFPTEAEIITPRADLQKVYETGRGSVRMRAVYRVEDGDIVIHALPHQVSGSKVLEQIAGQMQAKKLPMVADLRDESDHENPTRIVIIPRSNRVDVEELMTHLFATTDLETSYRVNLNIIGLDGKPQVKDLRQLLSEWLQFRIGTVRRRLQFRLDKVERRLHLLDGLLIAFLNLDEVIHIIRTEDQPKAVLMERFELSEVQADYILDTRLRQLARLEEMKIRGEQEELLKEQKRLQTLLGSEAKLKKLVREELIKDAETYGDDRRSPIVARAEARALSETELMPTEPVTVVLSEKGWVRCAKGHDIDAAGLSYKAGDGFKAAAPGRSNQYAVFIDSTGRSYSLPAHSLPSARGQGEPLSGRLTPPPGASFECVLLPDDDALFVIASDAGYGFVVKGEDLQAKNKAGKALLSLPNGSAVVAPRPVRDVEQDWLAAVTTEGRLLLFKVSDLPQLGKGKGNKIIGIPGERVASREEYLTDLAVLPAGATLVLQAGKRTLSLKGDDLEHYKGERGRRGNKLPRGFQRVDSLLVDIPPQD.

Residues 38 to 501 (LPHIGDGLKP…EARALSETEL (464 aa)) form the Topo IIA-type catalytic domain. The O-(5'-phospho-DNA)-tyrosine intermediate role is filled by Tyr127.

Belongs to the type II topoisomerase GyrA/ParC subunit family. ParC type 1 subfamily. Heterotetramer composed of ParC and ParE.

It localises to the cell membrane. It carries out the reaction ATP-dependent breakage, passage and rejoining of double-stranded DNA.. Topoisomerase IV is essential for chromosome segregation. It relaxes supercoiled DNA. Performs the decatenation events required during the replication of a circular DNA molecule. This chain is DNA topoisomerase 4 subunit A, found in Pseudomonas aeruginosa (strain ATCC 15692 / DSM 22644 / CIP 104116 / JCM 14847 / LMG 12228 / 1C / PRS 101 / PAO1).